A 210-amino-acid polypeptide reads, in one-letter code: MHSLLAYIPIAAMMVIIPGADTMLVMKNTLRYGPKAGRYNILGLATGLSFWTVIAILGLSVVIAKSVILFTTIKYLGAAYLIYLGVKSFFAKSMFSLDDMQSQAKNMASSPKRYYKTSFMQGSLSNILNPKTVLVYVTIMPQFINLNGNINQQLIILASILTLLAVLWFLFLVYIIDYAKKWMKNSKFQKVFQKITGIILVGFGIKTGLS.

4 helical membrane-spanning segments follow: residues 5–25, 50–70, 75–95, and 155–175; these read LAYIPIAAMMVIIPGADTMLV, FWTVIAILGLSVVIAKSVILF, YLGAAYLIYLGVKSFFAKSMF, and IILASILTLLAVLWFLFLVYI.

The protein belongs to the Rht family.

The protein resides in the cell membrane. This is an uncharacterized protein from Bacillus subtilis (strain 168).